The sequence spans 62 residues: Translational regulator CsrA 3 (62 aa).

It belongs to the CsrA/RsmA family. Homodimer; the beta-strands of each monomer intercalate to form a hydrophobic core, while the alpha-helices form wings that extend away from the core.

The protein localises to the cytoplasm. Functionally, a key translational regulator that binds mRNA to regulate translation initiation and/or mRNA stability. Mediates global changes in gene expression, shifting from rapid growth to stress survival by linking envelope stress, the stringent response and the catabolite repression systems. Usually binds in the 5'-UTR; binding at or near the Shine-Dalgarno sequence prevents ribosome-binding, repressing translation, binding elsewhere in the 5'-UTR can activate translation and/or stabilize the mRNA. Its function is antagonized by small RNA(s). The protein is Translational regulator CsrA 3 of Pseudomonas syringae pv. tomato (strain ATCC BAA-871 / DC3000).